A 354-amino-acid chain; its full sequence is tRNA N6-adenosine threonylcarbamoyltransferase (354 aa).

2 residues coordinate Fe cation: His111 and His115. Residues 134 to 138 (LVSGG), Asp167, Gly180, and Asn279 each bind substrate. Asp319 serves as a coordination point for Fe cation.

Belongs to the KAE1 / TsaD family. Fe(2+) serves as cofactor.

The protein resides in the cytoplasm. It carries out the reaction L-threonylcarbamoyladenylate + adenosine(37) in tRNA = N(6)-L-threonylcarbamoyladenosine(37) in tRNA + AMP + H(+). Required for the formation of a threonylcarbamoyl group on adenosine at position 37 (t(6)A37) in tRNAs that read codons beginning with adenine. Is involved in the transfer of the threonylcarbamoyl moiety of threonylcarbamoyl-AMP (TC-AMP) to the N6 group of A37, together with TsaE and TsaB. TsaD likely plays a direct catalytic role in this reaction. The polypeptide is tRNA N6-adenosine threonylcarbamoyltransferase (Neisseria meningitidis serogroup B (strain ATCC BAA-335 / MC58)).